Consider the following 385-residue polypeptide: Outer membrane protein P2 (385 aa).

Residues 1–20 (MKKTLAALIVGAFAASAANA) form the signal peptide.

It belongs to the Gram-negative porin family. In terms of assembly, homotrimer.

Its subcellular location is the cell outer membrane. Functionally, forms pores that allow passive diffusion of small molecules across the outer membrane. The sequence is that of Outer membrane protein P2 (ompP2) from Haemophilus influenzae.